Reading from the N-terminus, the 282-residue chain is Undecaprenyl-diphosphatase (282 aa).

The next 7 membrane-spanning stretches (helical) occupy residues 40–60 (GAAF…IYFM), 89–109 (WMIA…KDDI), 113–133 (LRSL…LSIA), 150–170 (ISEI…MALI), 196–216 (FSFL…LYKT), 230–250 (IAVA…FLLT), and 258–278 (GIFI…IGTG).

Belongs to the UppP family.

The protein localises to the cell inner membrane. The enzyme catalyses di-trans,octa-cis-undecaprenyl diphosphate + H2O = di-trans,octa-cis-undecaprenyl phosphate + phosphate + H(+). Functionally, catalyzes the dephosphorylation of undecaprenyl diphosphate (UPP). Confers resistance to bacitracin. The protein is Undecaprenyl-diphosphatase of Chlorobaculum parvum (strain DSM 263 / NCIMB 8327) (Chlorobium vibrioforme subsp. thiosulfatophilum).